Here is a 341-residue protein sequence, read N- to C-terminus: Glycerol-3-phosphate dehydrogenase [NAD(P)+] (341 aa).

Residues Ser-11, Trp-12, Arg-33, and Lys-106 each coordinate NADPH. Positions 106, 137, and 139 each coordinate sn-glycerol 3-phosphate. Ala-141 lines the NADPH pocket. Residues Lys-192, Asp-245, Ser-255, Arg-256, and Asn-257 each contribute to the sn-glycerol 3-phosphate site. Catalysis depends on Lys-192, which acts as the Proton acceptor. Position 256 (Arg-256) interacts with NADPH. Residues Val-280 and Glu-282 each coordinate NADPH.

This sequence belongs to the NAD-dependent glycerol-3-phosphate dehydrogenase family.

Its subcellular location is the cytoplasm. The enzyme catalyses sn-glycerol 3-phosphate + NAD(+) = dihydroxyacetone phosphate + NADH + H(+). The catalysed reaction is sn-glycerol 3-phosphate + NADP(+) = dihydroxyacetone phosphate + NADPH + H(+). It participates in membrane lipid metabolism; glycerophospholipid metabolism. Functionally, catalyzes the reduction of the glycolytic intermediate dihydroxyacetone phosphate (DHAP) to sn-glycerol 3-phosphate (G3P), the key precursor for phospholipid synthesis. The polypeptide is Glycerol-3-phosphate dehydrogenase [NAD(P)+] (Bacillus cytotoxicus (strain DSM 22905 / CIP 110041 / 391-98 / NVH 391-98)).